The chain runs to 255 residues: MRILIILSIILCSLFTKADLEYVDDDIYNYNGSSNINGCREVYDPYEKFNRKIFAFNSVLDYIFLRPLAVGYKNLTNDYMKARVNSFVGNIDMPLTAVNYGLQLNYDKTMKSVWRFIINTTLGIGGLFDVAGKVGLSSDRQTFGNTLAHYGVGPGPYLVLPIIGSTNARDMTDPIFTNYALNPLMYYTHKDFELSVLAVSKINDRYNVLSFSDYVMKNSLDPYATIRSALHQAREASVQYPKNFKCPKPKNVNSN.

The N-terminal stretch at 1-18 (MRILIILSIILCSLFTKA) is a signal peptide.

This sequence belongs to the MlaA family.

This is an uncharacterized protein from Rickettsia bellii (strain RML369-C).